The chain runs to 487 residues: MSQRVLTTESGAPVADNQNSASAGIGGPLLIQDQHLIEKLARFNRERIPERVVHARGSGAYGHFEVTDDVSGFTHADFLNTVGKRTEVFLRFSTVADSLGGADAVRDPRGFALKFYTEEGNYDLVGNNTPVFFIKDPIKFPDFIHSQKRDPFTGRQEPDNVFDFWAHSPEATHQITWLMGDRGIPASYRHMDGFGSHTYQWTNARGESFFVKYHFKTDQGIRCLTADEAAKLAGEDPTSHQTDLVQAIERGVYPSWTLHVQLMPVAEAANYRFNPFDVTKVWPHADYPLKRVGRLVLDRNPDNVFAEVEQAAFSPNNFVPGIGPSPDKMLQGRLFAYADAHRYRLGVNHTQLAVNAPKAVPGGAANYGRDGLMAANPQGRYAKNYEPNSYDGPAETGTPLAAPLAVSGHTGTHEAPLHTKDDHFVQAGALYRLMSEDEKQRLVANLAGGLSQVSRNDVVEKNLAHFHAADPEYGKRVEEAVRALRED.

Residues 1–20 (MSQRVLTTESGAPVADNQNS) form a disordered region. Active-site residues include histidine 54 and asparagine 127. Residue tyrosine 337 coordinates heme.

It belongs to the catalase family. The cofactor is heme.

It carries out the reaction 2 H2O2 = O2 + 2 H2O. Its function is as follows. Decomposes hydrogen peroxide into water and oxygen; serves to protect cells from the toxic effects of hydrogen peroxide. In Streptomyces coelicolor (strain ATCC BAA-471 / A3(2) / M145), this protein is Catalase (katA).